The following is a 67-amino-acid chain: MPQLDTSTWFINIVSMILTLFIVFQLKISKHSYPTHPEVKTTKMTKHSAPWESKWTKIYSPLSLPQQ.

Residues 8 to 24 form a helical membrane-spanning segment; it reads TWFINIVSMILTLFIVF. An N6-acetyllysine; alternate modification is found at Lys54. The residue at position 54 (Lys54) is an N6-succinyllysine; alternate. N6-acetyllysine is present on Lys57.

The protein belongs to the ATPase protein 8 family. In terms of assembly, component of the ATP synthase complex composed at least of ATP5F1A/subunit alpha, ATP5F1B/subunit beta, ATP5MC1/subunit c (homooctomer), MT-ATP6/subunit a, MT-ATP8/subunit 8, ATP5ME/subunit e, ATP5MF/subunit f, ATP5MG/subunit g, ATP5MK/subunit k, ATP5MJ/subunit j, ATP5F1C/subunit gamma, ATP5F1D/subunit delta, ATP5F1E/subunit epsilon, ATP5PF/subunit F6, ATP5PB/subunit b, ATP5PD/subunit d, ATP5PO/subunit OSCP. ATP synthase complex consists of a soluble F(1) head domain (subunits alpha(3) and beta(3)) - the catalytic core - and a membrane F(0) domain - the membrane proton channel (subunits c, a, 8, e, f, g, k and j). These two domains are linked by a central stalk (subunits gamma, delta, and epsilon) rotating inside the F1 region and a stationary peripheral stalk (subunits F6, b, d, and OSCP). Interacts with PRICKLE3.

It localises to the mitochondrion membrane. Subunit 8, of the mitochondrial membrane ATP synthase complex (F(1)F(0) ATP synthase or Complex V) that produces ATP from ADP in the presence of a proton gradient across the membrane which is generated by electron transport complexes of the respiratory chain. ATP synthase complex consist of a soluble F(1) head domain - the catalytic core - and a membrane F(1) domain - the membrane proton channel. These two domains are linked by a central stalk rotating inside the F(1) region and a stationary peripheral stalk. During catalysis, ATP synthesis in the catalytic domain of F(1) is coupled via a rotary mechanism of the central stalk subunits to proton translocation. In vivo, can only synthesize ATP although its ATP hydrolase activity can be activated artificially in vitro. Part of the complex F(0) domain. The sequence is that of ATP synthase F(0) complex subunit 8 from Equus caballus (Horse).